Consider the following 450-residue polypeptide: Phosphoglucosamine mutase (450 aa).

Catalysis depends on serine 101, which acts as the Phosphoserine intermediate. Mg(2+) is bound by residues serine 101, aspartate 242, aspartate 244, and aspartate 246. A Phosphoserine modification is found at serine 101.

The protein belongs to the phosphohexose mutase family. The cofactor is Mg(2+). In terms of processing, activated by phosphorylation.

It catalyses the reaction alpha-D-glucosamine 1-phosphate = D-glucosamine 6-phosphate. Its function is as follows. Catalyzes the conversion of glucosamine-6-phosphate to glucosamine-1-phosphate. The sequence is that of Phosphoglucosamine mutase from Rhodopseudomonas palustris (strain HaA2).